The sequence spans 612 residues: Coagulation factor X-activating enzyme heavy chain (612 aa).

Positions 1 to 20 (MMQVLLVTISLAVFPYQGSS) are cleaved as a signal peptide. Positions 21–193 (IILESGNVND…KKASQLVATS (173 aa)) are cleaved as a propeptide — or 194. Residues 201 to 395 (TFIELVIVVD…YKPKCILNPP (195 aa)) enclose the Peptidase M12B domain. Glu-204 contacts Ca(2+). The N-linked (GlcNAc...) asparagine glycan is linked to Asn-259. Asp-286 provides a ligand contact to Ca(2+). Disulfide bonds link Cys-310–Cys-390, Cys-350–Cys-374, and Cys-352–Cys-357. His-335 provides a ligand contact to Zn(2+). The active site involves Glu-336. 2 residues coordinate Zn(2+): His-339 and His-345. 2 N-linked (GlcNAc...) asparagine glycosylation sites follow: Asn-353 and Asn-373. Residues Cys-390, Asn-393, Ile-405, Asn-408, Glu-412, Glu-415, and Asp-418 each coordinate Ca(2+). A Disintegrin domain is found at 403-489 (PPICGNEIWE…ECPADGFHAN (87 aa)). A disulfide bridge connects residues Cys-461 and Cys-481. A D/ECD-tripeptide motif is present at residues 467–469 (ECD).

Belongs to the venom metalloproteinase (M12B) family. P-III subfamily. P-IIId sub-subfamily. In terms of assembly, heterotrimer; disulfide-linked. The heterotrimer consists of 1 heavy chain and 2 light chains (lectins): LC1 and LC2 (AC Q7T045 and AC Q696W1). It depends on Zn(2+) as a cofactor. N-glycosylated. Contains 8.0% of hexoses, 2.5% of hexosamines and 2.5% of sialic acids. As to expression, expressed by the venom gland.

It localises to the secreted. It carries out the reaction Specifically activates several components of the blood clotting system, including coagulation factor X, coagulation factor IX and protein C by cleavage of Arg-|-Xaa bonds. Has no action on insulin B chain.. Calcium is required for the activity of the heterotrimer. Functionally, catalytic subunit of blood coagulation factor X-activating enzyme. Activates coagulation factor X (F10) by cleaving the Arg(234)-Ile(235) bond, activates coagulation factor IX (F9) by cleaving the Arg(226)-Val(227) bond and is also able to activate protein C (PROC). The polypeptide is Coagulation factor X-activating enzyme heavy chain (Macrovipera lebetinus (Levantine viper)).